We begin with the raw amino-acid sequence, 472 residues long: MMKRRRIFMYYCFCFLLKYVAFSNVTNPNTTLGHFEICKINIYSGDAEECVLENEFGKMFLFICDIDYNEMSKNIVLPSECAKKTYIDHVNPNGTSPEVNTYDIFPDLIGANESKFRDKFYFYGTPYSSKDIDFICLCFSEVKPDIKHIIKMSFKKMTKKIKGCDFGDNVPTKKDLTNGKALYENSSCHIYAYPGDVIGINCYKKDINNIYNNNLELSPNNCFHNVYYENDILLSSKNLIPNSRVIPDPSNDVKLSKMHSYMSYIILPDEINENVKISCSCKRNEYVGTMFLYVNTSKNILTYTGNNVEETAHLNDHYISIGDMWDMGLYENPEQIQSIISNHANKKYYEHMKIYKGNKMDPSDEDESNENAHNGNRANKDANYSEKMVDNRRQKNNSLNHTNYHGNYNENDNEINISTHDKYYEDHHLGSNRPLRKKRTFWQNLFGTSSSYYEVFNYFSIAFILIIHMLLW.

Residues 1 to 23 (MMKRRRIFMYYCFCFLLKYVAFS) form the signal peptide. Asn24, Asn29, Asn93, Asn112, and Asn185 each carry an N-linked (GlcNAc...) asparagine glycan. 6-Cys domains follow at residues 24–157 (NVTN…FKKM) and 160–299 (KIKG…TSKN). 5 cysteine pairs are disulfide-bonded: Cys64-Cys138, Cys81-Cys136, Cys164-Cys188, Cys202-Cys281, and Cys222-Cys279. 6 N-linked (GlcNAc...) asparagine glycosylation sites follow: Asn295, Asn306, Asn383, Asn396, Asn400, and Asn416. The segment at 359–385 (KMDPSDEDESNENAHNGNRANKDANYS) is disordered. Ser449 is lipidated: GPI-anchor amidated serine. A propeptide spans 450 to 472 (SSYYEVFNYFSIAFILIIHMLLW) (removed in mature form).

The protein localises to the cell surface. It is found in the cell membrane. Functionally, involved in sporozoite infection of hepatocytes and replication therein. The protein is Sporozoite surface protein P36p (P52) of Plasmodium berghei (strain Anka).